Here is a 118-residue protein sequence, read N- to C-terminus: uncharacterized protein (118 aa).

Helical transmembrane passes span 7-27 and 34-58; these read VIVKCEFFCIFTFIFGCFIIE and VFVACCTIIKMGRCNMCIFITAIIF.

It is found in the membrane. This is an uncharacterized protein from Saccharomyces cerevisiae (strain ATCC 204508 / S288c) (Baker's yeast).